The primary structure comprises 301 residues: Acetylglutamate kinase (301 aa).

Substrate-binding positions include 71-72, arginine 93, and asparagine 198; that span reads GG.

It belongs to the acetylglutamate kinase family. ArgB subfamily.

The protein resides in the cytoplasm. It carries out the reaction N-acetyl-L-glutamate + ATP = N-acetyl-L-glutamyl 5-phosphate + ADP. The protein operates within amino-acid biosynthesis; L-arginine biosynthesis; N(2)-acetyl-L-ornithine from L-glutamate: step 2/4. Catalyzes the ATP-dependent phosphorylation of N-acetyl-L-glutamate. This Rhizorhabdus wittichii (strain DSM 6014 / CCUG 31198 / JCM 15750 / NBRC 105917 / EY 4224 / RW1) (Sphingomonas wittichii) protein is Acetylglutamate kinase.